The following is a 130-amino-acid chain: Small ribosomal subunit protein uS9 (130 aa).

It belongs to the universal ribosomal protein uS9 family.

This Hahella chejuensis (strain KCTC 2396) protein is Small ribosomal subunit protein uS9.